The primary structure comprises 226 residues: Fibrillarin-like rRNA/tRNA 2'-O-methyltransferase (226 aa).

S-adenosyl-L-methionine-binding positions include 85–86 (TT), 104–105 (EF), 129–130 (DA), and 149–152 (DVAQ).

It belongs to the methyltransferase superfamily. Fibrillarin family. As to quaternary structure, interacts with nop5. Component of box C/D small ribonucleoprotein (sRNP) particles that contain rpl7ae, FlpA and nop5, plus a guide RNA.

Involved in pre-rRNA and tRNA processing. Utilizes the methyl donor S-adenosyl-L-methionine to catalyze the site-specific 2'-hydroxyl methylation of ribose moieties in rRNA and tRNA. Site specificity is provided by a guide RNA that base pairs with the substrate. Methylation occurs at a characteristic distance from the sequence involved in base pairing with the guide RNA. The protein is Fibrillarin-like rRNA/tRNA 2'-O-methyltransferase of Thermococcus sibiricus (strain DSM 12597 / MM 739).